A 429-amino-acid polypeptide reads, in one-letter code: Enolase (429 aa).

A (2R)-2-phosphoglycerate-binding site is contributed by Q163. The active-site Proton donor is the E205. Mg(2+)-binding residues include D242, E287, and D314. Positions 339, 368, 369, and 390 each coordinate (2R)-2-phosphoglycerate. Catalysis depends on K339, which acts as the Proton acceptor.

The protein belongs to the enolase family. Requires Mg(2+) as cofactor.

The protein resides in the cytoplasm. It is found in the secreted. Its subcellular location is the cell surface. It catalyses the reaction (2R)-2-phosphoglycerate = phosphoenolpyruvate + H2O. It functions in the pathway carbohydrate degradation; glycolysis; pyruvate from D-glyceraldehyde 3-phosphate: step 4/5. Functionally, catalyzes the reversible conversion of 2-phosphoglycerate (2-PG) into phosphoenolpyruvate (PEP). It is essential for the degradation of carbohydrates via glycolysis. This chain is Enolase, found in Anaeromyxobacter dehalogenans (strain 2CP-C).